We begin with the raw amino-acid sequence, 417 residues long: Probable diacetyl reductase [(R)-acetoin forming] 2 (417 aa).

Cys-39 provides a ligand contact to Zn(2+). Ser-63 carries the phosphoserine modification. Residues His-64, Cys-120, Cys-123, Cys-131, and Gln-173 each contribute to the Zn(2+) site. A disordered region spans residues 380 to 417; sequence GELNREADNEKKEISELSSRKDQERLRESINEAKLRHT. Residues 381–417 are compositionally biased toward basic and acidic residues; it reads ELNREADNEKKEISELSSRKDQERLRESINEAKLRHT.

Belongs to the zinc-containing alcohol dehydrogenase family. The cofactor is Zn(2+).

It is found in the cytoplasm. The protein resides in the nucleus. The enzyme catalyses (R)-acetoin + NAD(+) = diacetyl + NADH + H(+). Catalyzes the irreversible reduction of 2,3-butanediol to (S)-acetoin in the presence of NADH. This is Probable diacetyl reductase [(R)-acetoin forming] 2 (BDH2) from Saccharomyces cerevisiae (strain ATCC 204508 / S288c) (Baker's yeast).